A 622-amino-acid chain; its full sequence is Chaperone protein HscA homolog (622 aa).

This sequence belongs to the heat shock protein 70 family.

Its function is as follows. Chaperone involved in the maturation of iron-sulfur cluster-containing proteins. Has a low intrinsic ATPase activity which is markedly stimulated by HscB. The polypeptide is Chaperone protein HscA homolog (Burkholderia pseudomallei (strain K96243)).